The primary structure comprises 173 residues: Cytochrome c-type biogenesis protein CcmE (173 aa).

The Cytoplasmic portion of the chain corresponds to 1 to 7; that stretch reads MTRKSRR. The chain crosses the membrane as a helical; Signal-anchor for type II membrane protein span at residues 8 to 28; the sequence is LILIAACGAVLALALGLILSA. The Periplasmic segment spans residues 29–173; sequence MSGSIVFFRS…DATLGQRSER (145 aa). Heme-binding residues include H122 and Y126. The interval 134-173 is disordered; that stretch reads ALKAQGRWQEGGGKDASKAAPKDAAKPETADATLGQRSER. Residues 145-162 show a composition bias toward basic and acidic residues; it reads GGKDASKAAPKDAAKPET.

Belongs to the CcmE/CycJ family.

Its subcellular location is the cell inner membrane. In terms of biological role, heme chaperone required for the biogenesis of c-type cytochromes. Transiently binds heme delivered by CcmC and transfers the heme to apo-cytochromes in a process facilitated by CcmF and CcmH. The chain is Cytochrome c-type biogenesis protein CcmE from Methylorubrum extorquens (strain CM4 / NCIMB 13688) (Methylobacterium extorquens).